A 343-amino-acid polypeptide reads, in one-letter code: GTPase Obg (343 aa).

In terms of domain architecture, Obg spans 1 to 159 (MQFIDHATIC…RQLRLELKLL (159 aa)). The 169-residue stretch at 160 to 328 (AEVGLIGLPN…LLRLVWQWLD (169 aa)) folds into the OBG-type G domain. GTP-binding positions include 166–173 (GLPNAGKS), 191–195 (FTTLV), 213–216 (DIPG), 280–283 (NKID), and 309–311 (SSA). Ser173 and Thr193 together coordinate Mg(2+).

It belongs to the TRAFAC class OBG-HflX-like GTPase superfamily. OBG GTPase family. As to quaternary structure, monomer. Mg(2+) is required as a cofactor.

Its subcellular location is the cytoplasm. An essential GTPase which binds GTP, GDP and possibly (p)ppGpp with moderate affinity, with high nucleotide exchange rates and a fairly low GTP hydrolysis rate. Plays a role in control of the cell cycle, stress response, ribosome biogenesis and in those bacteria that undergo differentiation, in morphogenesis control. This Synechococcus elongatus (strain ATCC 33912 / PCC 7942 / FACHB-805) (Anacystis nidulans R2) protein is GTPase Obg.